Consider the following 107-residue polypeptide: Phosphoribosyl-ATP pyrophosphatase (107 aa).

Belongs to the PRA-PH family.

Its subcellular location is the cytoplasm. The catalysed reaction is 1-(5-phospho-beta-D-ribosyl)-ATP + H2O = 1-(5-phospho-beta-D-ribosyl)-5'-AMP + diphosphate + H(+). It functions in the pathway amino-acid biosynthesis; L-histidine biosynthesis; L-histidine from 5-phospho-alpha-D-ribose 1-diphosphate: step 2/9. The chain is Phosphoribosyl-ATP pyrophosphatase from Rhizobium johnstonii (strain DSM 114642 / LMG 32736 / 3841) (Rhizobium leguminosarum bv. viciae).